The sequence spans 307 residues: Homoserine kinase (307 aa).

Residue 95-105 coordinates ATP; that stretch reads PQSRGLGSSAS.

It belongs to the GHMP kinase family. Homoserine kinase subfamily.

It is found in the cytoplasm. The enzyme catalyses L-homoserine + ATP = O-phospho-L-homoserine + ADP + H(+). It functions in the pathway amino-acid biosynthesis; L-threonine biosynthesis; L-threonine from L-aspartate: step 4/5. In terms of biological role, catalyzes the ATP-dependent phosphorylation of L-homoserine to L-homoserine phosphate. This chain is Homoserine kinase, found in Corynebacterium aurimucosum (strain ATCC 700975 / DSM 44827 / CIP 107346 / CN-1) (Corynebacterium nigricans).